Here is a 503-residue protein sequence, read N- to C-terminus: ATP synthase subunit alpha (503 aa).

169–176 lines the ATP pocket; it reads GDRQTGKT.

The protein belongs to the ATPase alpha/beta chains family. F-type ATPases have 2 components, CF(1) - the catalytic core - and CF(0) - the membrane proton channel. CF(1) has five subunits: alpha(3), beta(3), gamma(1), delta(1), epsilon(1). CF(0) has three main subunits: a(1), b(2) and c(9-12). The alpha and beta chains form an alternating ring which encloses part of the gamma chain. CF(1) is attached to CF(0) by a central stalk formed by the gamma and epsilon chains, while a peripheral stalk is formed by the delta and b chains.

Its subcellular location is the cell membrane. The enzyme catalyses ATP + H2O + 4 H(+)(in) = ADP + phosphate + 5 H(+)(out). Produces ATP from ADP in the presence of a proton gradient across the membrane. The alpha chain is a regulatory subunit. The sequence is that of ATP synthase subunit alpha from Staphylococcus epidermidis (strain ATCC 35984 / DSM 28319 / BCRC 17069 / CCUG 31568 / BM 3577 / RP62A).